The sequence spans 70 residues: Protein FlmC homolog (70 aa).

The segment at 1 to 21 is disordered; the sequence is MSSPHQDSLLPRFAQGEEGHE.

This Escherichia coli protein is Protein FlmC homolog.